Consider the following 384-residue polypeptide: GTPase Obg (384 aa).

Residues 1–159 (MKFVDEVEIR…RPLKLELMLL (159 aa)) form the Obg domain. Residues 72 to 94 (NGMGKNCTGRRGNDIVLPVPPGT) are disordered. Residues 160–333 (ADVGLLGMPN…LCREVMSYLE (174 aa)) enclose the OBG-type G domain. Residues 166 to 173 (GMPNAGKS), 191 to 195 (FTTLI), 213 to 216 (DIPG), 283 to 286 (NKVD), and 314 to 316 (AAL) contribute to the GTP site. Ser-173 and Thr-193 together coordinate Mg(2+). The segment at 358–384 (EEVLEEEMDDEDDDDDDDHDVEVIYQK) is disordered. The span at 360 to 377 (VLEEEMDDEDDDDDDDHD) shows a compositional bias: acidic residues.

It belongs to the TRAFAC class OBG-HflX-like GTPase superfamily. OBG GTPase family. Monomer. It depends on Mg(2+) as a cofactor.

It is found in the cytoplasm. In terms of biological role, an essential GTPase which binds GTP, GDP and possibly (p)ppGpp with moderate affinity, with high nucleotide exchange rates and a fairly low GTP hydrolysis rate. Plays a role in control of the cell cycle, stress response, ribosome biogenesis and in those bacteria that undergo differentiation, in morphogenesis control. The sequence is that of GTPase Obg from Idiomarina loihiensis (strain ATCC BAA-735 / DSM 15497 / L2-TR).